The chain runs to 413 residues: E3 ubiquitin ligase ICP22 (413 aa).

Residues 1-124 (MADIPPDPPA…PPRKSKRPRI (124 aa)) are disordered. A compositionally biased stretch (basic and acidic residues) spans 62–76 (GDLRGGRRRSPRELG). Residues 84 to 97 (SAESTTGTESEGTG) show a composition bias toward low complexity. At tyrosine 189 the chain carries Phosphotyrosine; by host. Disordered regions lie at residues 289–334 (LETN…SASG) and 370–390 (AERS…PERE). A compositionally biased stretch (acidic residues) spans 297–309 (SDDEISDATDSDD).

This sequence belongs to the herpesviridae ICP22 family. Post-translationally, tyrosine phosphorylated.

The protein resides in the host nucleus. The protein operates within protein modification; protein ubiquitination. Functionally, functions as an E3 ubiquitin ligase and plays a role in the inhibition of innate immunity by preventing IFN-mediated signaling. Induces the ubiquitination and degradation of host STAT1, STAT2 and IRF9, resulting in the blockade of ISGF3 nuclear translocation. This Human herpesvirus 2 (strain HG52) (HHV-2) protein is E3 ubiquitin ligase ICP22.